A 288-amino-acid polypeptide reads, in one-letter code: AA9 family lytic polysaccharide monooxygenase A (288 aa).

A signal peptide spans 1–22; sequence MKSTSATKFSVLAAATFAAAHG. Residues H21 and H104 each coordinate Cu(2+). 2 disulfide bridges follow: C74-C191 and C115-C119. An N-linked (GlcNAc...) asparagine glycan is attached at N151. O2 contacts are provided by H177 and Q186. Y188 contacts Cu(2+). Positions 236-270 are disordered; sequence PEPYKSGSGSSDNAAEAVSSAAAEEPAAAATSAAA. A compositionally biased stretch (low complexity) spans 249–270; sequence AAEAVSSAAAEEPAAAATSAAA.

The protein belongs to the polysaccharide monooxygenase AA9 family. It depends on Cu(2+) as a cofactor.

It is found in the secreted. It catalyses the reaction [(1-&gt;4)-beta-D-glucosyl]n+m + reduced acceptor + O2 = 4-dehydro-beta-D-glucosyl-[(1-&gt;4)-beta-D-glucosyl]n-1 + [(1-&gt;4)-beta-D-glucosyl]m + acceptor + H2O.. Its function is as follows. Lytic polysaccharide monooxygenase (LPMO) that depolymerizes crystalline and amorphous polysaccharides via the oxidation of scissile alpha- or beta-(1-4)-glycosidic bonds, yielding C1 and C4 oxidation products. Catalysis by LPMOs requires the reduction of the active-site copper from Cu(II) to Cu(I) by a reducing agent and H(2)O(2) or O(2) as a cosubstrate. Active on cellulose and on xyloglucan for deconstruction of plant biomass. The sequence is that of AA9 family lytic polysaccharide monooxygenase A from Geotrichum candidum (Oospora lactis).